Reading from the N-terminus, the 257-residue chain is uncharacterized protein (257 aa).

The N-terminal stretch at 1 to 22 is a signal peptide; it reads MGYLKRFALYISVMILMFAIAG. C23 carries N-palmitoyl cysteine lipidation. Residue C23 is the site of S-diacylglycerol cysteine attachment.

It belongs to the staphylococcal tandem lipoprotein family.

The protein resides in the cell membrane. This is an uncharacterized protein from Staphylococcus aureus (strain MRSA252).